Here is a 435-residue protein sequence, read N- to C-terminus: Nucleoredoxin (435 aa).

S2 carries the N-acetylserine modification. The Thioredoxin domain maps to 167-314 (PKPFREVIAG…FPWHPKPVLE (148 aa)).

Belongs to the nucleoredoxin family. Associates with the phosphatase 2A holoenzyme. Interacts with PPP2CA; the interaction is direct. Interacts with DVL1 (via PDZ domain); the interaction is direct and regulated by oxidative stress. As to expression, widely expressed with higher expression in testis and skin.

Its subcellular location is the cytoplasm. It localises to the cytosol. The protein localises to the nucleus. It catalyses the reaction [protein]-dithiol + NAD(+) = [protein]-disulfide + NADH + H(+). The catalysed reaction is [protein]-dithiol + NADP(+) = [protein]-disulfide + NADPH + H(+). In terms of biological role, functions as a redox-dependent negative regulator of the Wnt signaling pathway, possibly by preventing ubiquitination of DVL3 by the BCR(KLHL12) complex. May also function as a transcriptional regulator act as a regulator of protein phosphatase 2A (PP2A). In Mus musculus (Mouse), this protein is Nucleoredoxin (Nxn).